A 250-amino-acid polypeptide reads, in one-letter code: ATP synthase subunit a (250 aa).

5 helical membrane passes run 27-47 (TDTVLSTAIAALIVLALAFYL), 83-103 (IAPFVLPLAVTIFVFILISNW), 129-149 (INYVLALALFVFVCYHAAGIW), 191-211 (IFAGGILVALIALFPPYIMWA), and 219-239 (FDLFVGAIQAFIFALLTILYF).

It belongs to the ATPase A chain family. F-type ATPases have 2 components, CF(1) - the catalytic core - and CF(0) - the membrane proton channel. CF(1) has five subunits: alpha(3), beta(3), gamma(1), delta(1), epsilon(1). CF(0) has three main subunits: a(1), b(2) and c(9-12). The alpha and beta chains form an alternating ring which encloses part of the gamma chain. CF(1) is attached to CF(0) by a central stalk formed by the gamma and epsilon chains, while a peripheral stalk is formed by the delta and b chains.

The protein resides in the cell membrane. In terms of biological role, key component of the proton channel; it plays a direct role in the translocation of protons across the membrane. This Mycobacterium marinum (strain ATCC BAA-535 / M) protein is ATP synthase subunit a.